The sequence spans 340 residues: Phosphoribosylformylglycinamidine cyclo-ligase (340 aa).

This sequence belongs to the AIR synthase family.

The protein resides in the cytoplasm. The catalysed reaction is 2-formamido-N(1)-(5-O-phospho-beta-D-ribosyl)acetamidine + ATP = 5-amino-1-(5-phospho-beta-D-ribosyl)imidazole + ADP + phosphate + H(+). It participates in purine metabolism; IMP biosynthesis via de novo pathway; 5-amino-1-(5-phospho-D-ribosyl)imidazole from N(2)-formyl-N(1)-(5-phospho-D-ribosyl)glycinamide: step 2/2. This is Phosphoribosylformylglycinamidine cyclo-ligase from Streptococcus mutans serotype c (strain ATCC 700610 / UA159).